The sequence spans 216 residues: MQPEQLNQEEESKCPVPPEVRDAWLKSHGGKKPSEVHDTPHPTMLPTEREISTIPKVVTESDSGKEEKWIYPSQQMFFDAMKRKNWNPHPEDMKTIVPIHNAVNERAWQDILQWEQGWGSEKCGGPKLERFDGNVKKLTPKARILNLLGYNKPFDRHDWLVNRCGRKVAYVIDFYNGPTVNGTPSIYLDVRPKLSVHGAWMRVYRWTNEHFSQNSK.

Residues 1–46 (MQPEQLNQEEESKCPVPPEVRDAWLKSHGGKKPSEVHDTPHPTMLP) are disordered.

Belongs to the cytochrome c-type heme lyase family.

It is found in the mitochondrion inner membrane. It carries out the reaction holo-[cytochrome c] = apo-[cytochrome c] + heme b. Functionally, lyase that catalyzes the covalent linking of the heme group to the cytochrome C1 apoprotein to produce the mature functional cytochrome. In Schizosaccharomyces pombe (strain 972 / ATCC 24843) (Fission yeast), this protein is Putative holocytochrome-c1 synthase.